The sequence spans 517 residues: GMP synthase [glutamine-hydrolyzing] (517 aa).

Residues 9–199 (RILILDFGSQ…VLNVCGCEGL (191 aa)) enclose the Glutamine amidotransferase type-1 domain. Catalysis depends on C86, which acts as the Nucleophile. Catalysis depends on residues H173 and E175. One can recognise a GMPS ATP-PPase domain in the interval 200–392 (WTSASIIEDA…LGLPYNMLYR (193 aa)). 227–233 (SGGVDSS) provides a ligand contact to ATP.

In terms of assembly, homodimer.

It catalyses the reaction XMP + L-glutamine + ATP + H2O = GMP + L-glutamate + AMP + diphosphate + 2 H(+). It participates in purine metabolism; GMP biosynthesis; GMP from XMP (L-Gln route): step 1/1. Its function is as follows. Catalyzes the synthesis of GMP from XMP. In Aliivibrio fischeri (strain MJ11) (Vibrio fischeri), this protein is GMP synthase [glutamine-hydrolyzing].